The following is a 979-amino-acid chain: Translation initiation factor IF-2 (979 aa).

The segment covering 50–77 has biased composition (basic and acidic residues); it reads LKRSHGQSDDSARKKITLTKRETSEIRQ. The segment at 50 to 385 is disordered; sequence LKRSHGQSDD…GKHNADDARS (336 aa). Residues 78–87 show a composition bias toward polar residues; that stretch reads SDSTGKTRTV. Basic and acidic residues-rich tracts occupy residues 98–109, 121–142, and 149–173; these read IKRDDVESHGDG, EEVRRDEEQRREQAEALARQEA, and EAAEREEAERRAKQEALEAEQRRQA. The span at 174–192 shows a compositional bias: low complexity; that stretch reads ELLAQKAAEEAAAAQAAAD. Composition is skewed to basic and acidic residues over residues 196–211, 219–263, and 280–291; these read ETAREKAEEDKARLAT, NADD…EAEA, and PSERKAEEKKAE. Residues 317 to 327 are compositionally biased toward low complexity; sequence APAATTTTAAA. Residues 351-368 are compositionally biased toward gly residues; that stretch reads GGGLKTRGDSSGGVGGWR. The tr-type G domain maps to 479 to 646; it reads PRPPVVTVMG…NVLLQAEVLE (168 aa). A G1 region spans residues 488-495; sequence GHVDHGKT. 488 to 495 provides a ligand contact to GTP; it reads GHVDHGKT. The tract at residues 513-517 is G2; sequence GITQH. Residues 534-537 form a G3 region; it reads DTPG. GTP is bound by residues 534–538 and 588–591; these read DTPGH and TKVD. Residues 588–591 form a G4 region; it reads TKVD. The tract at residues 624–626 is G5; it reads SAK.

The protein belongs to the TRAFAC class translation factor GTPase superfamily. Classic translation factor GTPase family. IF-2 subfamily.

The protein resides in the cytoplasm. Its function is as follows. One of the essential components for the initiation of protein synthesis. Protects formylmethionyl-tRNA from spontaneous hydrolysis and promotes its binding to the 30S ribosomal subunits. Also involved in the hydrolysis of GTP during the formation of the 70S ribosomal complex. In Cupriavidus metallidurans (strain ATCC 43123 / DSM 2839 / NBRC 102507 / CH34) (Ralstonia metallidurans), this protein is Translation initiation factor IF-2.